Reading from the N-terminus, the 338-residue chain is MEKQTVAVLGPGSWGTALSQVLNDNGHEVRIWGNLPEQINEINTHHTNKHYFKDVVLDENIIAYTDLAETLKDVDAILFVVPTKVTRLVAQQVAQTLDHKVIIMHASKGLEPDSHKRLSTILEEEIPEHLRSDIVVVSGPSHAEETIVRDLTLITAASKDLQTAQYVQELFSNHYFRLYTNTDVIGVETAGALKNIIAVGAGALHGLGFGDNAKAAIIARGLAEITRLGVALGASPLTYSGLSGVGDLIVTGTSIHSRNWRAGDALGRGESLADIEANMGMVIEGISTTRAAYELAQELGVYMPITQAIYQVIYHGTNIKDAIYDIMNNEFKAENEWS.

Positions 13, 14, and 108 each coordinate NADPH. Residues lysine 108, glycine 139, and serine 141 each coordinate sn-glycerol 3-phosphate. Residue alanine 143 participates in NADPH binding. The sn-glycerol 3-phosphate site is built by lysine 194, aspartate 247, serine 257, arginine 258, and asparagine 259. Lysine 194 functions as the Proton acceptor in the catalytic mechanism. Residue arginine 258 coordinates NADPH. NADPH contacts are provided by valine 282 and glutamate 284.

Belongs to the NAD-dependent glycerol-3-phosphate dehydrogenase family.

It is found in the cytoplasm. It catalyses the reaction sn-glycerol 3-phosphate + NAD(+) = dihydroxyacetone phosphate + NADH + H(+). It carries out the reaction sn-glycerol 3-phosphate + NADP(+) = dihydroxyacetone phosphate + NADPH + H(+). It participates in membrane lipid metabolism; glycerophospholipid metabolism. In terms of biological role, catalyzes the reduction of the glycolytic intermediate dihydroxyacetone phosphate (DHAP) to sn-glycerol 3-phosphate (G3P), the key precursor for phospholipid synthesis. The polypeptide is Glycerol-3-phosphate dehydrogenase [NAD(P)+] (Streptococcus pneumoniae (strain Hungary19A-6)).